Reading from the N-terminus, the 199-residue chain is ATP-dependent Clp protease proteolytic subunit (199 aa).

Catalysis depends on Ser97, which acts as the Nucleophile. Residue His122 is part of the active site.

The protein belongs to the peptidase S14 family. In terms of assembly, fourteen ClpP subunits assemble into 2 heptameric rings which stack back to back to give a disk-like structure with a central cavity, resembling the structure of eukaryotic proteasomes.

Its subcellular location is the cytoplasm. It carries out the reaction Hydrolysis of proteins to small peptides in the presence of ATP and magnesium. alpha-casein is the usual test substrate. In the absence of ATP, only oligopeptides shorter than five residues are hydrolyzed (such as succinyl-Leu-Tyr-|-NHMec, and Leu-Tyr-Leu-|-Tyr-Trp, in which cleavage of the -Tyr-|-Leu- and -Tyr-|-Trp bonds also occurs).. Cleaves peptides in various proteins in a process that requires ATP hydrolysis. Has a chymotrypsin-like activity. Plays a major role in the degradation of misfolded proteins. The chain is ATP-dependent Clp protease proteolytic subunit from Geobacter metallireducens (strain ATCC 53774 / DSM 7210 / GS-15).